A 390-amino-acid chain; its full sequence is MKRVFLIVLDSVGIGEMPDAANYKDEGSNTLKAAAKSEFFSTPNLEKLGLFHMDGLTDMANSKVVPQATYARMNEASKGKDTTIGHWEISGIISEKPLPTFPEGFPKELLDEFEKRTGRKVICNKPYSGTEVIKDYGKEHVETGALIVYTSADSVFQIAAHEGVVPIEELYRYCEIAREICKGPTGVGRVIARPFEGEYPDYRRTAKRHDYSLQPPRDTMLNQLKEAGYSVLAVGKINDIFAGSGVTEMVYTKNNAEGIEETLKYQKKEFEGLCFVNLVDFDMVYGHRNDVDGYAKALSYFDEQLPRFLESMQEEDILMITADHGCDPSTPSTDHSREYTPLIVYGNQIKGNTNLGTRKTFADIGSAILEYFNVPSRIQGESFLEECMKK.

Residues aspartate 10, aspartate 282, histidine 287, aspartate 323, histidine 324, and histidine 335 each contribute to the Mn(2+) site.

The protein belongs to the phosphopentomutase family. It depends on Mn(2+) as a cofactor.

The protein resides in the cytoplasm. It carries out the reaction 2-deoxy-alpha-D-ribose 1-phosphate = 2-deoxy-D-ribose 5-phosphate. The enzyme catalyses alpha-D-ribose 1-phosphate = D-ribose 5-phosphate. Its pathway is carbohydrate degradation; 2-deoxy-D-ribose 1-phosphate degradation; D-glyceraldehyde 3-phosphate and acetaldehyde from 2-deoxy-alpha-D-ribose 1-phosphate: step 1/2. In terms of biological role, isomerase that catalyzes the conversion of deoxy-ribose 1-phosphate (dRib-1-P) and ribose 1-phosphate (Rib-1-P) to deoxy-ribose 5-phosphate (dRib-5-P) and ribose 5-phosphate (Rib-5-P), respectively. In Lachnoclostridium phytofermentans (strain ATCC 700394 / DSM 18823 / ISDg) (Clostridium phytofermentans), this protein is Phosphopentomutase.